We begin with the raw amino-acid sequence, 150 residues long: Large ribosomal subunit protein uL13 (150 aa).

The protein belongs to the universal ribosomal protein uL13 family. As to quaternary structure, part of the 50S ribosomal subunit.

Functionally, this protein is one of the early assembly proteins of the 50S ribosomal subunit, although it is not seen to bind rRNA by itself. It is important during the early stages of 50S assembly. This is Large ribosomal subunit protein uL13 from Mesoplasma florum (strain ATCC 33453 / NBRC 100688 / NCTC 11704 / L1) (Acholeplasma florum).